The following is a 268-amino-acid chain: Tryptophan synthase alpha chain (268 aa).

Catalysis depends on proton acceptor residues Glu-49 and Asp-60.

This sequence belongs to the TrpA family. Tetramer of two alpha and two beta chains.

It carries out the reaction (1S,2R)-1-C-(indol-3-yl)glycerol 3-phosphate + L-serine = D-glyceraldehyde 3-phosphate + L-tryptophan + H2O. It functions in the pathway amino-acid biosynthesis; L-tryptophan biosynthesis; L-tryptophan from chorismate: step 5/5. Its function is as follows. The alpha subunit is responsible for the aldol cleavage of indoleglycerol phosphate to indole and glyceraldehyde 3-phosphate. The chain is Tryptophan synthase alpha chain from Aliivibrio fischeri (strain ATCC 700601 / ES114) (Vibrio fischeri).